The sequence spans 400 residues: Multidrug resistance protein MdtH (400 aa).

A run of 10 helical transmembrane segments spans residues 13 to 33 (YFLLLDNMLVVLGFFVVFPLI), 34 to 54 (SIRFVEQLGWAGVIVGFALGL), 99 to 116 (PWILWLSCILSALGGTLF), 139 to 159 (LLLMQDSAGAVIGALIGSWLL), 165 to 185 (LVCWVGAGIFVLAAIFNAWLL), 214 to 234 (VLTLTGYFVLSVQVMLMFPIV), 244 to 264 (AVKWMYAIEALLSLTLLYPIA), 289 to 309 (FPVGITHSLHAIFLIITLFYL), 340 to 360 (LGLAFGGAIGYTGGGWMYDIG), and 365 to 385 (LPELPWFLLGSIGFITLYALH).

It belongs to the major facilitator superfamily. DHA1 family. MdtH (TC 2.A.1.2.21) subfamily.

Its subcellular location is the cell inner membrane. This Proteus mirabilis (strain HI4320) protein is Multidrug resistance protein MdtH.